The following is a 267-amino-acid chain: tRNA pseudouridine synthase A (267 aa).

Catalysis depends on Asp52, which acts as the Nucleophile. Tyr110 contacts substrate.

The protein belongs to the tRNA pseudouridine synthase TruA family. As to quaternary structure, homodimer.

The catalysed reaction is uridine(38/39/40) in tRNA = pseudouridine(38/39/40) in tRNA. Formation of pseudouridine at positions 38, 39 and 40 in the anticodon stem and loop of transfer RNAs. The sequence is that of tRNA pseudouridine synthase A from Paraburkholderia phymatum (strain DSM 17167 / CIP 108236 / LMG 21445 / STM815) (Burkholderia phymatum).